Reading from the N-terminus, the 196-residue chain is Vascular-related unknown protein 2 (196 aa).

Positions 84–130 (ANNINTNPKKRRIIHQHKEEEEEELQKGEEEEEDEEDTASSPSNKTK) are disordered. A compositionally biased stretch (acidic residues) spans 103–121 (EEEEELQKGEEEEEDEEDT).

Functionally, involved in the regulation of plant growth. This Arabidopsis thaliana (Mouse-ear cress) protein is Vascular-related unknown protein 2.